Here is a 624-residue protein sequence, read N- to C-terminus: Cell pattern formation-associated protein ust1 (624 aa).

Disordered regions lie at residues 1 to 24 and 43 to 99; these read MSTA…APTG and RSGS…GHSS. Low complexity predominate over residues 43-62; that stretch reads RSGSVPASASGSAPGSASGS. The segment covering 70-85 has biased composition (basic residues); that stretch reads QHHTGHHHYSAHHTHS. The 107-residue stretch at 233 to 339 folds into the HTH APSES-type domain; the sequence is RVTTTLWEDE…PNIQSFLYHP (107 aa). The segment at residues 267–288 is a DNA-binding region (H-T-H motif); sequence GTKLLNVCGMSRGKRDGILKNE. Low complexity predominate over residues 352–362; sequence AQERQAQRQRA. Disordered regions lie at residues 352–456, 474–504, and 538–624; these read AQER…QQQQ, QQAY…LNNS, and SWND…IHHE. The segment covering 369-391 has biased composition (polar residues); that stretch reads PGANGTSQAPPLMRANTTPSNGD. Residues 392-426 show a composition bias toward low complexity; it reads TSTFSSGLSSLGSWTGSHDQGHASAPTTAQPSPSS. Positions 427–451 are enriched in polar residues; the sequence is MHNGATQMHMSLSNHGTASPTYAQS. Residues 571–587 are compositionally biased toward basic and acidic residues; it reads LDGDDLHSPDSSDDRLA. A compositionally biased stretch (gly residues) spans 615 to 624; sequence VGNGSGIHHE.

Belongs to the EFG1/PHD1/stuA family. Post-translationally, phosphorylated but is not a target of cAMP signaling.

It is found in the nucleus. Transcription factor that regulates asexual reproduction. Binds the StuA-response elements (StRE) with the consensus sequence 5'-(A/T)CGCG(T/A)N(A/C)-3' at the promoters of target genes. Regulates dimorphism, virulence, and the sporulation program. Required for mating, gall induction, and sporogenesis in maize tissue. Regulates expression of the filament-down-regulated gene UM00205 and the teliospore-specific gene ssp1. This chain is Cell pattern formation-associated protein ust1 (ust1), found in Mycosarcoma maydis (Corn smut fungus).